Here is a 208-residue protein sequence, read N- to C-terminus: Small ribosomal subunit protein uS4 (208 aa).

The region spanning Leu-98 to Glu-159 is the S4 RNA-binding domain.

The protein belongs to the universal ribosomal protein uS4 family. Part of the 30S ribosomal subunit. Contacts protein S5. The interaction surface between S4 and S5 is involved in control of translational fidelity.

Functionally, one of the primary rRNA binding proteins, it binds directly to 16S rRNA where it nucleates assembly of the body of the 30S subunit. With S5 and S12 plays an important role in translational accuracy. The sequence is that of Small ribosomal subunit protein uS4 from Anaeromyxobacter dehalogenans (strain 2CP-1 / ATCC BAA-258).